We begin with the raw amino-acid sequence, 225 residues long: Putative adhesin RT0816 (225 aa).

Positions 1-22 are cleaved as a signal peptide; it reads MKKLLLIAATSATILSSSISFA.

The chain is Putative adhesin RT0816 from Rickettsia typhi (strain ATCC VR-144 / Wilmington).